Reading from the N-terminus, the 295-residue chain is Cytidine deaminase (295 aa).

CMP/dCMP-type deaminase domains lie at Glu48–Ala168 and Asp187–Leu295. Position 89-91 (Asn89–Glu91) interacts with substrate. His102 is a Zn(2+) binding site. Residue Glu104 is the Proton donor of the active site. The Zn(2+) site is built by Cys129 and Cys132.

This sequence belongs to the cytidine and deoxycytidylate deaminase family. In terms of assembly, homodimer. Zn(2+) serves as cofactor.

The enzyme catalyses cytidine + H2O + H(+) = uridine + NH4(+). It carries out the reaction 2'-deoxycytidine + H2O + H(+) = 2'-deoxyuridine + NH4(+). Functionally, this enzyme scavenges exogenous and endogenous cytidine and 2'-deoxycytidine for UMP synthesis. The sequence is that of Cytidine deaminase from Vibrio cholerae serotype O1 (strain ATCC 39315 / El Tor Inaba N16961).